A 552-amino-acid chain; its full sequence is Mothers against decapentaplegic homolog 4 (552 aa).

Positions 1–322 (MDNMSITNTP…PISNHPAPEY (322 aa)) are mediates interaction with ZBTB7A. In terms of domain architecture, MH1 spans 18 to 142 (SIVHSLMCHR…YERVVSPGID (125 aa)). Lys-37 is subject to N6-acetyllysine. The required for interaction with TSC22D1 stretch occupies residues 44 to 69 (VKKLKEKKDELDSLITAITTNGAHPS). A Zn(2+)-binding site is contributed by Cys-71. Residue Lys-113 forms a Glycyl lysine isopeptide (Lys-Gly) (interchain with G-Cter in SUMO2) linkage. Residues Cys-115, Cys-127, and His-132 each coordinate Zn(2+). The disordered stretch occupies residues 167–193 (EGQPSLPTEGHSIQTIQHPPSNRASTE). Positions 177–193 (HSIQTIQHPPSNRASTE) are enriched in polar residues. Positions 275–320 (PYTPNLPHHQNGHLQHHPPMPPHPGHYWPVHNELAFQPPISNHPAP) are SAD. The MH2 domain maps to 323–552 (WCSIAYFEMD…MPIADPQPLD (230 aa)). 2 positions are modified to N6-acetyllysine: Lys-428 and Lys-507. Lys-519 participates in a covalent cross-link: Glycyl lysine isopeptide (Lys-Gly) (interchain with G-Cter in ubiquitin).

The protein belongs to the dwarfin/SMAD family. As to quaternary structure, monomer; in the absence of TGF-beta activation. Heterotrimer; on TGF-beta activation. Heterotrimer composed of two molecules of a C-terminally phosphorylated R-SMAD molecule, SMAD2 or SMAD3, and one molecule of SMAD4 to form the transcriptional active SMAD2/SMAD3-SMAD4 complex. Found in a ternary complex composed of SMAD4, STK11/LKB1 and STK11IP. Found in a complex with SMAD1 and YY1. Identified in a complex that contains at least ZNF451, SMAD2, SMAD3 and SMAD4. Interacts with ATF2, COPS5, DACH1, MSG1, SKI, STK11/LKB1, STK11IP and TRIM33. Associates with ZNF423 or ZNF521 in response to BMP2 leading to activate transcription of BMP target genes. Interacts with USP9X. Interacts with RBPMS. Interacts with WWTR1 (via coiled-coil domain). Interacts with CITED1 and CITED2. Interacts with PDPK1 (via PH domain). Interacts with VPS39; this interaction affects heterodimer formation with SMAD3, but not with SMAD2, and leads to inhibition of SMAD3-dependent transcription activation. Interactions with VPS39 and SMAD2 may be mutually exclusive. Interacts (via MH2 domain) with ZNF451 (via N-terminal zinc-finger domains). Interacts with ZC3H3. Interacts weakly with ZNF8. Interacts with NUP93 and IPO7; translocates SMAD4 to the nucleus through the NPC upon BMP7 stimulation resulting in activation of SMAD4 signaling. Interacts with CREB3L1, the interaction takes place upon TGFB1 induction and SMAD4 acts as a CREB3L1 coactivator to induce the expression of genes involved in the assembly of collagen extracellular matrix. Interacts with DLX1. Interacts with ZBTB7A; the interaction is direct and stimulated by TGFB1. Interacts with CREBBP; the recruitment of this transcriptional coactivator is negatively regulated by ZBTB7A. Interacts with EP300; the interaction with this transcriptional coactivator is negatively regulated by ZBTB7A. Interacts with HDAC1. Interacts (via MH2 domain) with ZMIZ1 (via SP-RING-type domain); in the TGF-beta signaling pathway increases the activity of the SMAD3/SMAD4 transcriptional complex. Interacts (via N-terminus) with TSC22D1. In terms of processing, phosphorylated by PDPK1. Post-translationally, monoubiquitinated on Lys-519 by E3 ubiquitin-protein ligase TRIM33. Monoubiquitination hampers its ability to form a stable complex with activated SMAD2/3 resulting in inhibition of TGF-beta/BMP signaling cascade. Deubiquitination by USP9X restores its competence to mediate TGF-beta signaling.

Its subcellular location is the cytoplasm. It is found in the nucleus. In terms of biological role, common SMAD (co-SMAD) is the coactivator and mediator of signal transduction by TGF-beta (transforming growth factor). Component of the heterotrimeric SMAD2/SMAD3-SMAD4 complex that forms in the nucleus and is required for the TGF-mediated signaling. Promotes binding of the SMAD2/SMAD4/FAST-1 complex to DNA and provides an activation function required for SMAD1 or SMAD2 to stimulate transcription. Component of the multimeric SMAD3/SMAD4/JUN/FOS complex which forms at the AP1 promoter site; required for synergistic transcriptional activity in response to TGF-beta. Acts synergistically with SMAD1 and YY1 in bone morphogenetic protein (BMP)-mediated cardiac-specific gene expression. Binds to SMAD binding elements (SBEs) (5'-GTCT/AGAC-3') within BMP response element (BMPRE) of cardiac activating regions. May act as a tumor suppressor. Positively regulates PDPK1 kinase activity by stimulating its dissociation from the 14-3-3 protein YWHAQ which acts as a negative regulator. In muscle physiology, plays a central role in the balance between atrophy and hypertrophy. When recruited by MSTN, promotes atrophy response via phosphorylated SMAD2/4. MSTN decrease causes SMAD4 release and subsequent recruitment by the BMP pathway to promote hypertrophy via phosphorylated SMAD1/5/8. The sequence is that of Mothers against decapentaplegic homolog 4 (Smad4) from Rattus norvegicus (Rat).